Reading from the N-terminus, the 227-residue chain is Cytochrome c biogenesis ATP-binding export protein CcmA (227 aa).

The ABC transporter domain occupies Leu26 to Ser227. Residue Gly58 to Thr65 participates in ATP binding.

It belongs to the ABC transporter superfamily. CcmA exporter (TC 3.A.1.107) family. As to quaternary structure, the complex is composed of two ATP-binding proteins (CcmA) and two transmembrane proteins (CcmB).

Its subcellular location is the cell inner membrane. The catalysed reaction is heme b(in) + ATP + H2O = heme b(out) + ADP + phosphate + H(+). In terms of biological role, part of the ABC transporter complex CcmAB involved in the biogenesis of c-type cytochromes; once thought to export heme, this seems not to be the case, but its exact role is uncertain. Responsible for energy coupling to the transport system. This Cupriavidus necator (strain ATCC 17699 / DSM 428 / KCTC 22496 / NCIMB 10442 / H16 / Stanier 337) (Ralstonia eutropha) protein is Cytochrome c biogenesis ATP-binding export protein CcmA.